Here is a 397-residue protein sequence, read N- to C-terminus: Succinate--CoA ligase [ADP-forming] subunit beta (397 aa).

Positions 9 to 254 (KALLKSFGAP…ETEQDAKELE (246 aa)) constitute an ATP-grasp domain. ATP is bound by residues K46, 53–55 (GRG), E109, A112, and E117. Mg(2+) contacts are provided by N209 and D223. Residues N274 and 331–333 (GIM) contribute to the substrate site.

The protein belongs to the succinate/malate CoA ligase beta subunit family. Heterotetramer of two alpha and two beta subunits. Requires Mg(2+) as cofactor.

It catalyses the reaction succinate + ATP + CoA = succinyl-CoA + ADP + phosphate. The catalysed reaction is GTP + succinate + CoA = succinyl-CoA + GDP + phosphate. It participates in carbohydrate metabolism; tricarboxylic acid cycle; succinate from succinyl-CoA (ligase route): step 1/1. In terms of biological role, succinyl-CoA synthetase functions in the citric acid cycle (TCA), coupling the hydrolysis of succinyl-CoA to the synthesis of either ATP or GTP and thus represents the only step of substrate-level phosphorylation in the TCA. The beta subunit provides nucleotide specificity of the enzyme and binds the substrate succinate, while the binding sites for coenzyme A and phosphate are found in the alpha subunit. The chain is Succinate--CoA ligase [ADP-forming] subunit beta from Hyphomonas neptunium (strain ATCC 15444).